Reading from the N-terminus, the 76-residue chain is uncharacterized protein (76 aa).

This is an uncharacterized protein from Bacillus subtilis (strain 168).